A 769-amino-acid polypeptide reads, in one-letter code: Post-GPI attachment to proteins factor 6 (769 aa).

Residues M1–A33 form the signal peptide. The Extracellular portion of the chain corresponds to S34–R543. N138 and N411 each carry an N-linked (GlcNAc...) asparagine glycan. The EGF-like domain maps to P495–T531. 3 disulfide bridges follow: C496/C506, C500/C519, and C521/C530. Residues A544–L564 traverse the membrane as a helical segment. At H565 to S567 the chain is on the cytoplasmic side. Residues F568 to C588 traverse the membrane as a helical segment. Residues D589–T603 lie on the Extracellular side of the membrane. Residues L604 to A624 traverse the membrane as a helical segment. Topologically, residues R625–K627 are cytoplasmic. Residues T628–M648 form a helical membrane-spanning segment. Residues D649–R651 lie on the Extracellular side of the membrane. The chain crosses the membrane as a helical span at residues G652–I672. At Y673–R688 the chain is on the cytoplasmic side. Residues W689–S709 traverse the membrane as a helical segment. Residues M710 to N715 are Extracellular-facing. A helical transmembrane segment spans residues Y716–P736. Topologically, residues P737–T769 are cytoplasmic.

The protein belongs to the TMEM8 family. In terms of processing, glycosylated.

It is found in the cell membrane. The protein resides in the lysosome membrane. The catalysed reaction is a 1,2-diacyl-sn-glycero-3-phosphocholine + H2O = a 1-acyl-sn-glycero-3-phosphocholine + a fatty acid + H(+). Involved in the lipid remodeling steps of GPI-anchor maturation. Lipid remodeling steps consist in the generation of 2 saturated fatty chains at the sn-2 position of GPI-anchor proteins (GPI-AP). Has phospholipase A2 activity that removes an acyl-chain at the sn-2 position of GPI-anchors during the remodeling of GPI. Required for the shedding of the GPI-AP CRIPTO, but not CFC1, at the cell surface. Shedding of CRIPTO modulates Nodal signaling by allowing soluble CRIPTO to act as a Nodal coreceptor on other cells. Also indirectly involved in the translocation of RAC1 from the cytosol to the plasma membrane by maintaining the steady state amount of CAV1-enriched plasma membrane subdomains, stabilizing RAC1 at the plasma membrane. This chain is Post-GPI attachment to proteins factor 6, found in Mus musculus (Mouse).